A 506-amino-acid chain; its full sequence is 2,3-bisphosphoglycerate-independent phosphoglycerate mutase (506 aa).

Positions 13 and 63 each coordinate Mn(2+). Serine 63 serves as the catalytic Phosphoserine intermediate. Substrate contacts are provided by residues histidine 124, 153 to 154 (RD), arginine 183, arginine 189, 254 to 257 (RADR), and lysine 330. Positions 396, 400, 437, 438, and 456 each coordinate Mn(2+).

It belongs to the BPG-independent phosphoglycerate mutase family. In terms of assembly, monomer. It depends on Mn(2+) as a cofactor.

The catalysed reaction is (2R)-2-phosphoglycerate = (2R)-3-phosphoglycerate. The protein operates within carbohydrate degradation; glycolysis; pyruvate from D-glyceraldehyde 3-phosphate: step 3/5. In terms of biological role, catalyzes the interconversion of 2-phosphoglycerate and 3-phosphoglycerate. The protein is 2,3-bisphosphoglycerate-independent phosphoglycerate mutase of Cereibacter sphaeroides (strain ATCC 17023 / DSM 158 / JCM 6121 / CCUG 31486 / LMG 2827 / NBRC 12203 / NCIMB 8253 / ATH 2.4.1.) (Rhodobacter sphaeroides).